Consider the following 61-residue polypeptide: uncharacterized protein (61 aa).

The helical transmembrane segment at 10-27 (RILFFFFIFFTLFLFNIP) threads the bilayer.

The protein localises to the membrane. This is an uncharacterized protein from Dictyostelium discoideum (Social amoeba).